Reading from the N-terminus, the 201-residue chain is ATP-dependent Clp protease proteolytic subunit (201 aa).

Ser-101 acts as the Nucleophile in catalysis. The active site involves His-126.

This sequence belongs to the peptidase S14 family. In terms of assembly, component of the chloroplastic Clp protease core complex.

It is found in the plastid. It localises to the chloroplast stroma. It carries out the reaction Hydrolysis of proteins to small peptides in the presence of ATP and magnesium. alpha-casein is the usual test substrate. In the absence of ATP, only oligopeptides shorter than five residues are hydrolyzed (such as succinyl-Leu-Tyr-|-NHMec, and Leu-Tyr-Leu-|-Tyr-Trp, in which cleavage of the -Tyr-|-Leu- and -Tyr-|-Trp bonds also occurs).. Functionally, cleaves peptides in various proteins in a process that requires ATP hydrolysis. Has a chymotrypsin-like activity. Plays a major role in the degradation of misfolded proteins. This is ATP-dependent Clp protease proteolytic subunit from Chaetosphaeridium globosum (Charophycean green alga).